A 171-amino-acid chain; its full sequence is Zinc uptake regulation protein (171 aa).

This sequence belongs to the Fur family.

Acts as a negative controlling element, employing Zn(2+) as a cofactor to bind the operator of the repressed genes (znuACB). The chain is Zinc uptake regulation protein (zur) from Escherichia coli (strain K12).